We begin with the raw amino-acid sequence, 169 residues long: Allophycocyanin subunit beta-18 (169 aa).

N72 carries the N4-methylasparagine modification. (2R,3E)-phycocyanobilin is bound at residue C82.

Belongs to the phycobiliprotein family. In terms of assembly, heterodimer of an alpha and a beta chain. Contains one covalently linked bilin chromophore.

It is found in the plastid. It localises to the chloroplast thylakoid membrane. Light-harvesting photosynthetic bile pigment-protein from the phycobiliprotein complex. Allophycocyanin has a maximum absorption at approximately 650 nanometers. This Pyropia yezoensis (Susabi-nori) protein is Allophycocyanin subunit beta-18 (apcF).